We begin with the raw amino-acid sequence, 1400 residues long: DNA-directed RNA polymerase subunit beta' (1400 aa).

Zn(2+) contacts are provided by C71, C73, C86, and C89. Mg(2+) contacts are provided by D462, D464, and D466. 4 residues coordinate Zn(2+): C810, C884, C891, and C894. The tract at residues 1378–1400 (EKQATIVPPAAPEAEPLALPPAE) is disordered.

Belongs to the RNA polymerase beta' chain family. The RNAP catalytic core consists of 2 alpha, 1 beta, 1 beta' and 1 omega subunit. When a sigma factor is associated with the core the holoenzyme is formed, which can initiate transcription. Mg(2+) serves as cofactor. Zn(2+) is required as a cofactor.

It catalyses the reaction RNA(n) + a ribonucleoside 5'-triphosphate = RNA(n+1) + diphosphate. Functionally, DNA-dependent RNA polymerase catalyzes the transcription of DNA into RNA using the four ribonucleoside triphosphates as substrates. The protein is DNA-directed RNA polymerase subunit beta' of Rhodopseudomonas palustris (strain BisB5).